Consider the following 405-residue polypeptide: MADVKKVVLAYSGGLDTSVILKWLQDTYNCEVVTFTADLGQGEEVEPARAKAQALGVKEIYIDDLREEFVRDFVYPMFRANTIYEGEYLLGTSIARPLIAKRLIEIANETGADAISHGATGKGNDQVRFELGAYALKPGVKVIAPWREWDLLSREKLMDYAEKHAIPIERHGKKKSPYSMDANLLHISYEGGVLEDTWTEHEEDMWRWTKSPEAAPDTPTYIELTYQAGDIVAIDGKAMTPAQVLAELNRIGGENGIGRLDIVENRYVGMKSRGCYETPGGTIMLKAHRAIESITLDREVAHLKDELMPKYASLIYNGFWWSPERLMLQQMIDASQANVNGVVRLKLYKGNVIVTGRKSDDSLFDANIATFEEDGGAYNQQDAAGFIKLNALRMRIAAGKGRKLI.

ATP is bound by residues 10–18 and A37; that span reads AYSGGLDTS. The L-citrulline site is built by Y88 and S93. G118 provides a ligand contact to ATP. Residues T120, N124, and D125 each coordinate L-aspartate. N124 contributes to the L-citrulline binding site. The L-citrulline site is built by R128, S179, S188, E264, and Y276.

This sequence belongs to the argininosuccinate synthase family. Type 1 subfamily. Homotetramer.

The protein resides in the cytoplasm. It carries out the reaction L-citrulline + L-aspartate + ATP = 2-(N(omega)-L-arginino)succinate + AMP + diphosphate + H(+). The protein operates within amino-acid biosynthesis; L-arginine biosynthesis; L-arginine from L-ornithine and carbamoyl phosphate: step 2/3. The sequence is that of Argininosuccinate synthase from Ectopseudomonas mendocina (strain ymp) (Pseudomonas mendocina).